The chain runs to 252 residues: Ribosomal RNA small subunit methyltransferase J (252 aa).

S-adenosyl-L-methionine contacts are provided by residues 101–102 (RD), 117–118 (ER), 153–154 (SS), and Asp-171.

The protein belongs to the methyltransferase superfamily. RsmJ family.

It is found in the cytoplasm. It carries out the reaction guanosine(1516) in 16S rRNA + S-adenosyl-L-methionine = N(2)-methylguanosine(1516) in 16S rRNA + S-adenosyl-L-homocysteine + H(+). Specifically methylates the guanosine in position 1516 of 16S rRNA. This chain is Ribosomal RNA small subunit methyltransferase J, found in Salmonella typhimurium (strain LT2 / SGSC1412 / ATCC 700720).